Reading from the N-terminus, the 571-residue chain is Proline--tRNA ligase (571 aa).

The protein belongs to the class-II aminoacyl-tRNA synthetase family. ProS type 1 subfamily. As to quaternary structure, homodimer.

Its subcellular location is the cytoplasm. The enzyme catalyses tRNA(Pro) + L-proline + ATP = L-prolyl-tRNA(Pro) + AMP + diphosphate. Functionally, catalyzes the attachment of proline to tRNA(Pro) in a two-step reaction: proline is first activated by ATP to form Pro-AMP and then transferred to the acceptor end of tRNA(Pro). As ProRS can inadvertently accommodate and process non-cognate amino acids such as alanine and cysteine, to avoid such errors it has two additional distinct editing activities against alanine. One activity is designated as 'pretransfer' editing and involves the tRNA(Pro)-independent hydrolysis of activated Ala-AMP. The other activity is designated 'posttransfer' editing and involves deacylation of mischarged Ala-tRNA(Pro). The misacylated Cys-tRNA(Pro) is not edited by ProRS. This Pseudomonas entomophila (strain L48) protein is Proline--tRNA ligase.